The following is a 294-amino-acid chain: Protoheme IX farnesyltransferase (294 aa).

Transmembrane regions (helical) follow at residues 24–44 (VVLLMLLTVIVGMYLAAPGWV), 48–68 (LIAFTLLGIGLCAGSAAAINH), 96–116 (ALWFAVIIGLMGLSLLILFVN), 118–138 (LTALLTFITLIGYAGVYTGYL), 145–165 (NIVIGGLAGAAPPLLGWTAVT), 172–192 (ALLLVLIIFTWTPPHFWALAI), 211–231 (GIQFTKLNIYLYTVLLLVVSL), 241–263 (WIYLLGALILGIRFLVWAHKLYF), and 268–288 (VVAMQTFRFSILYLMLLFVFL).

This sequence belongs to the UbiA prenyltransferase family. Protoheme IX farnesyltransferase subfamily.

Its subcellular location is the cell inner membrane. It carries out the reaction heme b + (2E,6E)-farnesyl diphosphate + H2O = Fe(II)-heme o + diphosphate. It participates in porphyrin-containing compound metabolism; heme O biosynthesis; heme O from protoheme: step 1/1. Functionally, converts heme B (protoheme IX) to heme O by substitution of the vinyl group on carbon 2 of heme B porphyrin ring with a hydroxyethyl farnesyl side group. The sequence is that of Protoheme IX farnesyltransferase from Legionella pneumophila (strain Lens).